We begin with the raw amino-acid sequence, 70 residues long: Aurein-3.1 (70 aa).

An N-terminal signal peptide occupies residues 1 to 22 (MAFLKKSLFLVLFLGLVSLSIC). The propeptide occupies 23 to 49 (EKEKRQNEEDEDENEAANHEEGSEEKR). The interval 27–48 (RQNEEDEDENEAANHEEGSEEK) is disordered. A compositionally biased stretch (basic and acidic residues) spans 38-48 (AANHEEGSEEK). The residue at position 66 (Ile-66) is an Isoleucine amide.

In terms of tissue distribution, expressed by the skin dorsal glands.

It is found in the secreted. Its subcellular location is the target cell membrane. Amphipathic alpha-helical antimicrobial peptide with weak to potent activity against Gram-positive bacteria, and no activity against Gram-negative bacteria. Probably acts by disturbing membrane functions with its amphipathic structure. Shows anticancer activity. This chain is Aurein-3.1, found in Ranoidea aurea (Green and golden bell frog).